The sequence spans 181 residues: uncharacterized protein (181 aa).

This is an uncharacterized protein from Acidianus filamentous virus 2 (isolate Italy/Pozzuoli) (AFV-2).